A 154-amino-acid polypeptide reads, in one-letter code: Interleukin-2 (154 aa).

Positions 1–20 (MYRMQLLSCIALSLALITNS) are cleaved as a signal peptide. T23 carries O-linked (GalNAc...) threonine glycosylation. C78 and C126 form a disulfide bridge.

The protein belongs to the IL-2 family.

It localises to the secreted. In terms of biological role, cytokine produced by activated CD4-positive helper T-cells and to a lesser extend activated CD8-positive T-cells and natural killer (NK) cells that plays pivotal roles in the immune response and tolerance. Binds to a receptor complex composed of either the high-affinity trimeric IL-2R (IL2RA/CD25, IL2RB/CD122 and IL2RG/CD132) or the low-affinity dimeric IL-2R (IL2RB and IL2RG). Interaction with the receptor leads to oligomerization and conformation changes in the IL-2R subunits resulting in downstream signaling starting with phosphorylation of JAK1 and JAK3. In turn, JAK1 and JAK3 phosphorylate the receptor to form a docking site leading to the phosphorylation of several substrates including STAT5. This process leads to activation of several pathways including STAT, phosphoinositide-3-kinase/PI3K and mitogen-activated protein kinase/MAPK pathways. Functions as a T-cell growth factor and can increase NK-cell cytolytic activity as well. Promotes strong proliferation of activated B-cells and subsequently immunoglobulin production. Plays a pivotal role in regulating the adaptive immune system by controlling the survival and proliferation of regulatory T-cells, which are required for the maintenance of immune tolerance. Moreover, participates in the differentiation and homeostasis of effector T-cell subsets, including Th1, Th2, Th17 as well as memory CD8-positive T-cells. This is Interleukin-2 (IL2) from Papio hamadryas (Hamadryas baboon).